Consider the following 274-residue polypeptide: Ribosomal RNA small subunit methyltransferase A (274 aa).

Residues H15, L17, G42, E64, D89, and N109 each coordinate S-adenosyl-L-methionine.

It belongs to the class I-like SAM-binding methyltransferase superfamily. rRNA adenine N(6)-methyltransferase family. RsmA subfamily.

The protein resides in the cytoplasm. It catalyses the reaction adenosine(1518)/adenosine(1519) in 16S rRNA + 4 S-adenosyl-L-methionine = N(6)-dimethyladenosine(1518)/N(6)-dimethyladenosine(1519) in 16S rRNA + 4 S-adenosyl-L-homocysteine + 4 H(+). Functionally, specifically dimethylates two adjacent adenosines (A1518 and A1519) in the loop of a conserved hairpin near the 3'-end of 16S rRNA in the 30S particle. May play a critical role in biogenesis of 30S subunits. The polypeptide is Ribosomal RNA small subunit methyltransferase A (Synechococcus sp. (strain CC9605)).